Reading from the N-terminus, the 411-residue chain is Glutamate dehydrogenase A (411 aa).

K102 is an active-site residue.

This sequence belongs to the Glu/Leu/Phe/Val dehydrogenases family.

The enzyme catalyses L-glutamate + NAD(+) + H2O = 2-oxoglutarate + NH4(+) + NADH + H(+). The catalysed reaction is L-glutamate + NADP(+) + H2O = 2-oxoglutarate + NH4(+) + NADPH + H(+). The chain is Glutamate dehydrogenase A (GDHA) from Nicotiana plumbaginifolia (Leadwort-leaved tobacco).